A 351-amino-acid chain; its full sequence is Photosystem II D2 protein (351 aa).

Residues 39 to 59 (CAFLALGGWLTGTTFVTSWYT) traverse the membrane as a helical segment. Chlorophyll a is bound at residue His-116. The chain crosses the membrane as a helical span at residues 123-139 (GFMLRQFEIARLVGIRP). Residues Gln-128 and Asn-141 each contribute to the pheophytin a site. A helical membrane pass occupies residues 151-164 (VFVSVFLMYPLGQS). A chlorophyll a-binding site is contributed by His-196. The chain crosses the membrane as a helical span at residues 206 to 226 (GALLCAIHGATVENTLFEDGE). A plastoquinone-binding residues include His-213 and Phe-260. Fe cation is bound at residue His-213. A Fe cation-binding site is contributed by His-267. The chain crosses the membrane as a helical span at residues 277-293 (GLWMSAVGIVGLALNLR).

It belongs to the reaction center PufL/M/PsbA/D family. PSII is composed of 1 copy each of membrane proteins PsbA, PsbB, PsbC, PsbD, PsbE, PsbF, PsbH, PsbI, PsbJ, PsbK, PsbL, PsbM, PsbT, PsbX, PsbY, PsbZ, Psb30/Ycf12, peripheral proteins PsbO, CyanoQ (PsbQ), PsbU, PsbV and a large number of cofactors. It forms dimeric complexes. It depends on The D1/D2 heterodimer binds P680, chlorophylls that are the primary electron donor of PSII, and subsequent electron acceptors. It shares a non-heme iron and each subunit binds pheophytin, quinone, additional chlorophylls, carotenoids and lipids. There is also a Cl(-1) ion associated with D1 and D2, which is required for oxygen evolution. The PSII complex binds additional chlorophylls, carotenoids and specific lipids. as a cofactor.

It localises to the cellular thylakoid membrane. It catalyses the reaction 2 a plastoquinone + 4 hnu + 2 H2O = 2 a plastoquinol + O2. Its function is as follows. Photosystem II (PSII) is a light-driven water:plastoquinone oxidoreductase that uses light energy to abstract electrons from H(2)O, generating O(2) and a proton gradient subsequently used for ATP formation. It consists of a core antenna complex that captures photons, and an electron transfer chain that converts photonic excitation into a charge separation. The D1/D2 (PsbA/PsbD) reaction center heterodimer binds P680, the primary electron donor of PSII as well as several subsequent electron acceptors. D2 is needed for assembly of a stable PSII complex. This is Photosystem II D2 protein from Nostoc sp. (strain PCC 7120 / SAG 25.82 / UTEX 2576).